The following is a 399-amino-acid chain: Elongation factor Tu (399 aa).

The tr-type G domain occupies 10–209; sequence KPHVNIGTIG…EVDRYIPTPE (200 aa). The tract at residues 19–26 is G1; it reads GHVDHGKT. 19 to 26 serves as a coordination point for GTP; the sequence is GHVDHGKT. Position 26 (Thr26) interacts with Mg(2+). The segment at 60 to 64 is G2; the sequence is GITIA. The tract at residues 81-84 is G3; that stretch reads DCPG. Residues 81–85 and 136–139 contribute to the GTP site; these read DCPGH and NKED. The interval 136–139 is G4; the sequence is NKED. The tract at residues 174–176 is G5; it reads SAL.

It belongs to the TRAFAC class translation factor GTPase superfamily. Classic translation factor GTPase family. EF-Tu/EF-1A subfamily. In terms of assembly, monomer.

The protein localises to the cytoplasm. It carries out the reaction GTP + H2O = GDP + phosphate + H(+). Its function is as follows. GTP hydrolase that promotes the GTP-dependent binding of aminoacyl-tRNA to the A-site of ribosomes during protein biosynthesis. This Wolinella succinogenes (strain ATCC 29543 / DSM 1740 / CCUG 13145 / JCM 31913 / LMG 7466 / NCTC 11488 / FDC 602W) (Vibrio succinogenes) protein is Elongation factor Tu.